A 312-amino-acid chain; its full sequence is Olfactory receptor 2B8 (312 aa).

Residues 1–25 (MDQKNGSSFTGFILLGFSDRPQLEL) are Extracellular-facing. Residue Asn5 is glycosylated (N-linked (GlcNAc...) asparagine). A helical transmembrane segment spans residues 26 to 49 (VLFVVLLIFYIFTLLGNKTIIVLS). Residues 50-57 (HLDPHLHT) are Cytoplasmic-facing. The helical transmembrane segment at 58-79 (PMYFFFSNLSFLDLCYTTGIVP) threads the bilayer. Residues 80-100 (QLLVNLRGADKSISYGGCVVQ) are Extracellular-facing. Cys97 and Cys189 are disulfide-bonded. Residues 101-120 (LYISLGLGSTECVLLGVMVF) traverse the membrane as a helical segment. Topologically, residues 121–139 (DRYAAVCRPLHYTVVMHPC) are cytoplasmic. Residues 140–158 (LYVLMASTSWVIGFANSLL) traverse the membrane as a helical segment. Residues 159-195 (QTVLILLLTLCGRNKLEHFLCEVPPLLKLACVDTTMN) are Extracellular-facing. A glycan (N-linked (GlcNAc...) asparagine) is linked at Asn195. A helical transmembrane segment spans residues 196–219 (ESELFFVSVIILLVPVALIIFSYS). At 220–236 (QIVRAVMRIKLATGQRK) the chain is on the cytoplasmic side. A helical membrane pass occupies residues 237 to 259 (VFGTCGSHLTVVSLFYGTAIYAY). At 260 to 272 (LQPGNNYSQDQGK) the chain is on the extracellular side. Asn265 is a glycosylation site (N-linked (GlcNAc...) asparagine). A helical membrane pass occupies residues 273–292 (FISLFYTIITPMINPLIYTL). The Cytoplasmic segment spans residues 293-312 (RNKDVKGALKKVLWKNYDSR).

It belongs to the G-protein coupled receptor 1 family.

It is found in the cell membrane. Its function is as follows. Odorant receptor. This Homo sapiens (Human) protein is Olfactory receptor 2B8.